Reading from the N-terminus, the 316-residue chain is Thiamine-monophosphate kinase (316 aa).

Mg(2+)-binding residues include aspartate 26, threonine 49, and aspartate 50. Aspartate 57 contributes to the substrate binding site. Position 79 (aspartate 79) interacts with Mg(2+). ATP-binding positions include tyrosine 109, glycine 126–aspartate 127, and arginine 151. Aspartate 127 is a Mg(2+) binding site. Mg(2+) is bound at residue aspartate 198. Serine 200 contacts ATP. Aspartate 201 is a Mg(2+) binding site. Residues glutamate 251 and phenylalanine 305 each contribute to the substrate site.

This sequence belongs to the thiamine-monophosphate kinase family.

The catalysed reaction is thiamine phosphate + ATP = thiamine diphosphate + ADP. Its pathway is cofactor biosynthesis; thiamine diphosphate biosynthesis; thiamine diphosphate from thiamine phosphate: step 1/1. Functionally, catalyzes the ATP-dependent phosphorylation of thiamine-monophosphate (TMP) to form thiamine-pyrophosphate (TPP), the active form of vitamin B1. The polypeptide is Thiamine-monophosphate kinase (Rhodopirellula baltica (strain DSM 10527 / NCIMB 13988 / SH1)).